The following is a 568-amino-acid chain: MTDNSQSLSLIKCPTGIQGFDEITNGGLPQGRPTLICGSAGCGKTLFGVEFLVRGAVEYGEPGVLVSFEESAKEIIQNVASLGWNLQDLVAEEKILIDHIYVEASEIQETGEYDLEALFIRLGYAINKIGAKRILLDTIEVLFSGLENTNIVRAELRRLFHWLKQKGVTAVITGERGDKNLTRQGLEEYVSDCVIKLDQKTVEEVATRTIQVVKYRGSRHSNNEYPFLIEENGISVLPITSLILNHSVSQERISTGIPQLDDMFGGQGYYRGSSILVTGRAGTGKTTLAAFFAQATCLRGERCLYLATEESPQQICRNLNSIGLDLSPYLDSQLLQFDATRPTNYNLEMRLFKIHSWVRNFKPSLVVVDPMSNLITSGNLNQTKNFFMRLIDYLKSQKITVFLTDLTGGNVGYDNEQTEVGVSSLMDTWLELQTLRINGERNRILYILKSRGMAHSNQVREFILSNDGVDLIEAYIGEGQVLTGTQRINQILEEEAIAKRRQQALELSKRNFERKKYLLQAKIDALQMKLASQDEELEVLMLEEKEFKQTMLANRNLIKKSRHIYQNP.

KaiC domains lie at 11-250 (IKCP…SVSQ) and 251-485 (ERIS…LTGT). A phosphoserine; by autocatalysis mark is found at serine 423 and serine 424.

It belongs to the KaiC family. Multimerizes, probably forming homohexamers, no interaction with KaiC1 or KaiC3 is seen.

It catalyses the reaction L-seryl-[protein] + ATP = O-phospho-L-seryl-[protein] + ADP + H(+). The enzyme catalyses L-threonyl-[protein] + ATP = O-phospho-L-threonyl-[protein] + ADP + H(+). It carries out the reaction ATP + H2O = ADP + phosphate + H(+). Its function is as follows. Autophosphorylates independently of KaiA. This Synechocystis sp. (strain ATCC 27184 / PCC 6803 / Kazusa) protein is Circadian clock protein KaiC2.